A 370-amino-acid chain; its full sequence is Ganglioside-induced differentiation-associated protein 1-like 1 (370 aa).

One can recognise a GST N-terminal domain in the interval 45–129 (ESLVLYHWTQ…YVERTFTGEH (85 aa)). The GST C-terminal domain maps to 177 to 344 (PKYATAEIRR…RLVKRKPPSF (168 aa)).

It belongs to the GST superfamily.

This Mus musculus (Mouse) protein is Ganglioside-induced differentiation-associated protein 1-like 1 (Gdap1l1).